We begin with the raw amino-acid sequence, 485 residues long: Glycogen synthase (485 aa).

Residue Lys-15 participates in ADP-alpha-D-glucose binding.

This sequence belongs to the glycosyltransferase 1 family. Bacterial/plant glycogen synthase subfamily.

The enzyme catalyses [(1-&gt;4)-alpha-D-glucosyl](n) + ADP-alpha-D-glucose = [(1-&gt;4)-alpha-D-glucosyl](n+1) + ADP + H(+). Its pathway is glycan biosynthesis; glycogen biosynthesis. Its function is as follows. Synthesizes alpha-1,4-glucan chains using ADP-glucose. This is Glycogen synthase from Thermosipho africanus (strain TCF52B).